Consider the following 423-residue polypeptide: Adenylosuccinate synthetase (423 aa).

GTP-binding positions include 12-18 (GDEGKGK) and 40-42 (GHT). Catalysis depends on D13, which acts as the Proton acceptor. The Mg(2+) site is built by D13 and G40. Residues 13 to 16 (DEGK), 38 to 41 (NAGH), T129, R143, Q224, T239, and R303 contribute to the IMP site. H41 (proton donor) is an active-site residue. Substrate is bound at residue 299-305 (SVTGRQR). GTP is bound by residues R305, 331–333 (KGD), and 412–414 (SVG).

Belongs to the adenylosuccinate synthetase family. As to quaternary structure, homodimer. It depends on Mg(2+) as a cofactor.

It localises to the cytoplasm. The enzyme catalyses IMP + L-aspartate + GTP = N(6)-(1,2-dicarboxyethyl)-AMP + GDP + phosphate + 2 H(+). It functions in the pathway purine metabolism; AMP biosynthesis via de novo pathway; AMP from IMP: step 1/2. Functionally, plays an important role in the de novo pathway of purine nucleotide biosynthesis. Catalyzes the first committed step in the biosynthesis of AMP from IMP. This is Adenylosuccinate synthetase from Flavobacterium psychrophilum (strain ATCC 49511 / DSM 21280 / CIP 103535 / JIP02/86).